The sequence spans 156 residues: ATP synthase subunit b (156 aa).

The chain crosses the membrane as a helical span at residues 12 to 32; it reads VAFFIFVIFCMKFVWPPVIAA.

Belongs to the ATPase B chain family. In terms of assembly, F-type ATPases have 2 components, F(1) - the catalytic core - and F(0) - the membrane proton channel. F(1) has five subunits: alpha(3), beta(3), gamma(1), delta(1), epsilon(1). F(0) has three main subunits: a(1), b(2) and c(10-14). The alpha and beta chains form an alternating ring which encloses part of the gamma chain. F(1) is attached to F(0) by a central stalk formed by the gamma and epsilon chains, while a peripheral stalk is formed by the delta and b chains.

The protein localises to the cell inner membrane. In terms of biological role, f(1)F(0) ATP synthase produces ATP from ADP in the presence of a proton or sodium gradient. F-type ATPases consist of two structural domains, F(1) containing the extramembraneous catalytic core and F(0) containing the membrane proton channel, linked together by a central stalk and a peripheral stalk. During catalysis, ATP synthesis in the catalytic domain of F(1) is coupled via a rotary mechanism of the central stalk subunits to proton translocation. Functionally, component of the F(0) channel, it forms part of the peripheral stalk, linking F(1) to F(0). The sequence is that of ATP synthase subunit b from Pseudomonas savastanoi pv. phaseolicola (strain 1448A / Race 6) (Pseudomonas syringae pv. phaseolicola (strain 1448A / Race 6)).